The chain runs to 565 residues: Thiol:disulfide interchange protein DsbD (565 aa).

Residues 1–19 (MAQRIFTLILLLCSTSVFA) form the signal peptide. Topologically, residues 20–162 (GLFDAPGRSQ…VPQQEQPTAQ (143 aa)) are periplasmic. 2 cysteine pairs are disulfide-bonded: Cys122–Cys128 and Cys182–Cys304. The chain crosses the membrane as a helical span at residues 163–183 (LPFSALWALLIGIGIAFTPCV). Residues 184–207 (LPMYPLISGIVLGGKQRLSTARAL) are Cytoplasmic-facing. The helical transmembrane segment at 208–228 (LLTFIYVQGMALTYTALGLVV) threads the bilayer. Residues 229 to 242 (AAAGLQFQAALQHP) lie on the Periplasmic side of the membrane. A helical transmembrane segment spans residues 243-263 (YVLIGLTIVFTLLAMSMFGLL). Over 264–295 (TLQLPSSLQTRLTLMSNRQQGGSPGGVFIMGT) the chain is Cytoplasmic. The chain crosses the membrane as a helical span at residues 296-316 (IAGLICSPCTTAPLSAILLYI). At 317–322 (AQSGNM) the chain is on the periplasmic side. The chain crosses the membrane as a helical span at residues 323-343 (WLGGGTLYLYALGMGLPLMLI). At 344-356 (TVFGNRLLPKSGP) the chain is on the cytoplasmic side. Residues 357 to 377 (WMEQVKTAFGFVILALPVFLL) form a helical membrane-spanning segment. Residues 378-383 (ERVIGD) are Periplasmic-facing. The helical transmembrane segment at 384 to 404 (VWGLRLWSALGVAFFGWAFIT) threads the bilayer. Topologically, residues 405 to 417 (SLQAKRGWMRVVQ) are cytoplasmic. Residues 418 to 438 (IILLAAALVSVRPLQDWAFGA) form a helical membrane-spanning segment. Residues 434–565 (WAFGATHTAQ…FSAHLRDRQP (132 aa)) enclose the Thioredoxin domain. The Periplasmic segment spans residues 439–565 (THTAQTQTHL…FSAHLRDRQP (127 aa)). An intrachain disulfide couples Cys480 to Cys483.

This sequence belongs to the thioredoxin family. DsbD subfamily.

Its subcellular location is the cell inner membrane. The enzyme catalyses [protein]-dithiol + NAD(+) = [protein]-disulfide + NADH + H(+). The catalysed reaction is [protein]-dithiol + NADP(+) = [protein]-disulfide + NADPH + H(+). Required to facilitate the formation of correct disulfide bonds in some periplasmic proteins and for the assembly of the periplasmic c-type cytochromes. Acts by transferring electrons from cytoplasmic thioredoxin to the periplasm. This transfer involves a cascade of disulfide bond formation and reduction steps. This chain is Thiol:disulfide interchange protein DsbD, found in Escherichia coli O157:H7.